Reading from the N-terminus, the 461-residue chain is Proline--tRNA ligase (461 aa).

This sequence belongs to the class-II aminoacyl-tRNA synthetase family. ProS type 3 subfamily. As to quaternary structure, homodimer.

The protein localises to the cytoplasm. The catalysed reaction is tRNA(Pro) + L-proline + ATP = L-prolyl-tRNA(Pro) + AMP + diphosphate. Its function is as follows. Catalyzes the attachment of proline to tRNA(Pro) in a two-step reaction: proline is first activated by ATP to form Pro-AMP and then transferred to the acceptor end of tRNA(Pro). This is Proline--tRNA ligase from Methanococcus vannielii (strain ATCC 35089 / DSM 1224 / JCM 13029 / OCM 148 / SB).